The following is a 324-amino-acid chain: Viral cathepsin (324 aa).

Residues 1–18 (MNKIVLYLLIYVGTFSAA) form the signal peptide. Positions 19–113 (YDLLKAPSYF…VVLNRPPDKG (95 aa)) are cleaved as a propeptide — activation peptide. Cystine bridges form between Cys-134/Cys-175, Cys-168/Cys-208, and Cys-263/Cys-311. Cys-137 is a catalytic residue. N-linked (GlcNAc...) asparagine; by host glycosylation occurs at Asn-159. Catalysis depends on residues His-270 and Asn-290.

Belongs to the peptidase C1 family. Post-translationally, synthesized as an inactive proenzyme and activated by proteolytic removal of the inhibitory propeptide.

It carries out the reaction Endopeptidase of broad specificity, hydrolyzing substrates of both cathepsin L and cathepsin B.. Its function is as follows. Cysteine protease that plays an essential role in host liquefaction to facilitate horizontal transmission of the virus. May participate in the degradation of foreign protein expressed by the baculovirus system. The sequence is that of Viral cathepsin (Vcath) from Choristoneura fumiferana defective polyhedrosis virus (Cfdef).